The sequence spans 296 residues: Ethanolamine ammonia-lyase small subunit (296 aa).

Adenosylcob(III)alamin is bound by residues valine 209 and glutamate 230.

The protein belongs to the EutC family. As to quaternary structure, the basic unit is a heterodimer which dimerizes to form tetramers. The heterotetramers trimerize; 6 large subunits form a core ring with 6 small subunits projecting outwards. The cofactor is adenosylcob(III)alamin.

It is found in the bacterial microcompartment. It catalyses the reaction ethanolamine = acetaldehyde + NH4(+). The protein operates within amine and polyamine degradation; ethanolamine degradation. Functionally, catalyzes the deamination of various vicinal amino-alcohols to oxo compounds. Allows this organism to utilize ethanolamine as the sole source of nitrogen and carbon in the presence of external vitamin B12. The sequence is that of Ethanolamine ammonia-lyase small subunit from Lachnoclostridium phytofermentans (strain ATCC 700394 / DSM 18823 / ISDg) (Clostridium phytofermentans).